Consider the following 377-residue polypeptide: MSAPTHTHSPLYLGLMSGTSADGIDAALVRFDDASHRRCELVAGITVGWEPQLREALVALGQGAEQMAIDRLGRLDAQVGLAFADAANQLIAEAGVAREQIRAIGSHGQTIRHRPQADPAFTWQIGDASRIAEHTGITTAADFRRRDVAAGGQGAPLMPAFHLAMLGASDEDRAVLNLGGIGNLTLIPRDGAVLGFDTGPANALLDSWCQQHRGTPFDADGAFAASGKVDAALLHALLADPWFALPPPKSTGREQFHLAWALQAMGTATLRPADVQATLLELTAATVADALLRHQPTTRRVLVCGGGVRNPVLLARLAARLPGVVVESSARHGLDPDYLEAMGFAWLAAELLAGRPANLPSVTGAAGPRLLGAIYPA.

18–25 (GTSADGID) is an ATP binding site.

Belongs to the anhydro-N-acetylmuramic acid kinase family.

The enzyme catalyses 1,6-anhydro-N-acetyl-beta-muramate + ATP + H2O = N-acetyl-D-muramate 6-phosphate + ADP + H(+). It participates in amino-sugar metabolism; 1,6-anhydro-N-acetylmuramate degradation. Its pathway is cell wall biogenesis; peptidoglycan recycling. Functionally, catalyzes the specific phosphorylation of 1,6-anhydro-N-acetylmuramic acid (anhMurNAc) with the simultaneous cleavage of the 1,6-anhydro ring, generating MurNAc-6-P. Is required for the utilization of anhMurNAc either imported from the medium or derived from its own cell wall murein, and thus plays a role in cell wall recycling. The protein is Anhydro-N-acetylmuramic acid kinase of Xanthomonas campestris pv. campestris (strain 8004).